The sequence spans 390 residues: GTPase Obg (390 aa).

Residues 1–159 form the Obg domain; that stretch reads MKFVDEATIL…RELTLELLLL (159 aa). Residues 128-147 form a disordered region; it reads SRFKSSVNRAPRQKTNGTKG. A compositionally biased stretch (polar residues) spans 129 to 145; that stretch reads RFKSSVNRAPRQKTNGT. The OBG-type G domain maps to 160–333; it reads ADVGMLGLPN…LCWDVMNFLK (174 aa). Residues 166–173, 191–195, 213–216, 283–286, and 314–316 contribute to the GTP site; these read GLPNAGKS, FTTLV, DIPG, NKVD, and SAA. Ser173 and Thr193 together coordinate Mg(2+).

Belongs to the TRAFAC class OBG-HflX-like GTPase superfamily. OBG GTPase family. Monomer. Mg(2+) is required as a cofactor.

It is found in the cytoplasm. An essential GTPase which binds GTP, GDP and possibly (p)ppGpp with moderate affinity, with high nucleotide exchange rates and a fairly low GTP hydrolysis rate. Plays a role in control of the cell cycle, stress response, ribosome biogenesis and in those bacteria that undergo differentiation, in morphogenesis control. This Pectobacterium atrosepticum (strain SCRI 1043 / ATCC BAA-672) (Erwinia carotovora subsp. atroseptica) protein is GTPase Obg.